Consider the following 237-residue polypeptide: Ribosomal RNA small subunit methyltransferase G (237 aa).

S-adenosyl-L-methionine-binding positions include Gly-78, Phe-83, Ala-129–Glu-130, and Arg-148.

The protein belongs to the methyltransferase superfamily. RNA methyltransferase RsmG family.

It localises to the cytoplasm. Specifically methylates the N7 position of a guanine in 16S rRNA. This is Ribosomal RNA small subunit methyltransferase G from Streptococcus thermophilus (strain CNRZ 1066).